A 286-amino-acid polypeptide reads, in one-letter code: E3 ubiquitin-protein ligase SINA-like 7 (286 aa).

The segment at 51–87 adopts an RING-type zinc-finger fold; it reads CPICYEAFTIPIFQCDNGHLACSSCCPKLNNKCPACT. Residues 101-285 are SBD; it reads VLESILIPCP…MRISVKKLNK (185 aa). The SIAH-type zinc finger occupies 104 to 162; sequence SILIPCPNAKLGCKKNVSYGKELTHEKECMFSHCACPALDCNYTSSYKDLYTHYRITHM. Zn(2+) is bound by residues cysteine 109, cysteine 116, histidine 128, cysteine 132, cysteine 139, cysteine 144, histidine 156, and histidine 161.

Belongs to the SINA (Seven in absentia) family.

It carries out the reaction S-ubiquitinyl-[E2 ubiquitin-conjugating enzyme]-L-cysteine + [acceptor protein]-L-lysine = [E2 ubiquitin-conjugating enzyme]-L-cysteine + N(6)-ubiquitinyl-[acceptor protein]-L-lysine.. It functions in the pathway protein modification; protein ubiquitination. E3 ubiquitin-protein ligase that mediates ubiquitination and subsequent proteasomal degradation of target proteins. E3 ubiquitin ligases accept ubiquitin from an E2 ubiquitin-conjugating enzyme in the form of a thioester and then directly transfers the ubiquitin to targeted substrates. It probably triggers the ubiquitin-mediated degradation of different substrates. This chain is E3 ubiquitin-protein ligase SINA-like 7, found in Arabidopsis thaliana (Mouse-ear cress).